Here is a 371-residue protein sequence, read N- to C-terminus: Phosphate acyltransferase (371 aa).

The protein belongs to the PlsX family. In terms of assembly, homodimer. Probably interacts with PlsY.

Its subcellular location is the cytoplasm. The enzyme catalyses a fatty acyl-[ACP] + phosphate = an acyl phosphate + holo-[ACP]. It participates in lipid metabolism; phospholipid metabolism. Functionally, catalyzes the reversible formation of acyl-phosphate (acyl-PO(4)) from acyl-[acyl-carrier-protein] (acyl-ACP). This enzyme utilizes acyl-ACP as fatty acyl donor, but not acyl-CoA. This chain is Phosphate acyltransferase, found in Ruegeria pomeroyi (strain ATCC 700808 / DSM 15171 / DSS-3) (Silicibacter pomeroyi).